Consider the following 599-residue polypeptide: Elongation factor 4 (599 aa).

The tr-type G domain maps to 4 to 186 (KYIRNFSIIA…AIVEKVPPPK (183 aa)). Residues 16–21 (DHGKST) and 133–136 (NKID) contribute to the GTP site.

This sequence belongs to the TRAFAC class translation factor GTPase superfamily. Classic translation factor GTPase family. LepA subfamily.

The protein localises to the cell inner membrane. It catalyses the reaction GTP + H2O = GDP + phosphate + H(+). Required for accurate and efficient protein synthesis under certain stress conditions. May act as a fidelity factor of the translation reaction, by catalyzing a one-codon backward translocation of tRNAs on improperly translocated ribosomes. Back-translocation proceeds from a post-translocation (POST) complex to a pre-translocation (PRE) complex, thus giving elongation factor G a second chance to translocate the tRNAs correctly. Binds to ribosomes in a GTP-dependent manner. The chain is Elongation factor 4 from Bdellovibrio bacteriovorus (strain ATCC 15356 / DSM 50701 / NCIMB 9529 / HD100).